The chain runs to 366 residues: NADH-quinone oxidoreductase subunit D (366 aa).

The protein belongs to the complex I 49 kDa subunit family. In terms of assembly, NDH-1 is composed of 14 different subunits. Subunits NuoB, C, D, E, F, and G constitute the peripheral sector of the complex.

It is found in the cell membrane. The catalysed reaction is a quinone + NADH + 5 H(+)(in) = a quinol + NAD(+) + 4 H(+)(out). NDH-1 shuttles electrons from NADH, via FMN and iron-sulfur (Fe-S) centers, to quinones in the respiratory chain. The immediate electron acceptor for the enzyme in this species is believed to be a menaquinone. Couples the redox reaction to proton translocation (for every two electrons transferred, four hydrogen ions are translocated across the cytoplasmic membrane), and thus conserves the redox energy in a proton gradient. The protein is NADH-quinone oxidoreductase subunit D of Bacillus cereus (strain ATCC 10987 / NRS 248).